The sequence spans 502 residues: ATP synthase subunit alpha (502 aa).

169–176 (GDRQTGKT) is a binding site for ATP.

Belongs to the ATPase alpha/beta chains family. In terms of assembly, F-type ATPases have 2 components, CF(1) - the catalytic core - and CF(0) - the membrane proton channel. CF(1) has five subunits: alpha(3), beta(3), gamma(1), delta(1), epsilon(1). CF(0) has three main subunits: a(1), b(2) and c(9-12). The alpha and beta chains form an alternating ring which encloses part of the gamma chain. CF(1) is attached to CF(0) by a central stalk formed by the gamma and epsilon chains, while a peripheral stalk is formed by the delta and b chains.

The protein resides in the cell inner membrane. It carries out the reaction ATP + H2O + 4 H(+)(in) = ADP + phosphate + 5 H(+)(out). Produces ATP from ADP in the presence of a proton gradient across the membrane. The alpha chain is a regulatory subunit. This is ATP synthase subunit alpha from Solidesulfovibrio magneticus (strain ATCC 700980 / DSM 13731 / RS-1) (Desulfovibrio magneticus).